A 490-amino-acid polypeptide reads, in one-letter code: Ribosome biogenesis protein YTM1 (490 aa).

Residues 1–22 are disordered; the sequence is MDGLEDGPLDASTATSQKPQRQ. The tract at residues 23-104 is ubiquitin-like (UBL) domain; it reads VRLKLTSRHE…ETTLDVEYVR (82 aa). WD repeat units follow at residues 116–168, 175–213, 224–263, 298–338, 340–379, 385–425, and 449–487; these read LHDD…IALS, GHTA…DGFS, GHKG…NPAA, SHTA…LVDT, TASH…TTVS, GHTN…TDKD, and GEGV…PNGG. Residues 255–286 form a disordered region; the sequence is TRKSENPAAPESLLPSNTSRSSKRRKLNSSVS.

This sequence belongs to the WD repeat WDR12/YTM1 family. Component of the NOP7 complex, composed of ERB1, NOP7 and YTM1. The complex is held together by ERB1, which interacts with NOP7 via its N-terminal domain and with YTM1 via a high-affinity interaction between the seven-bladed beta-propeller domains of the 2 proteins. The NOP7 complex associates with the 66S pre-ribosome. Interacts (via UBL domain) with MDN1 (via VWFA/MIDAS domain).

It is found in the nucleus. The protein resides in the nucleolus. Its subcellular location is the nucleoplasm. Functionally, component of the NOP7 complex, which is required for maturation of the 25S and 5.8S ribosomal RNAs and formation of the 60S ribosome. The polypeptide is Ribosome biogenesis protein YTM1 (Ajellomyces capsulatus (strain NAm1 / WU24) (Darling's disease fungus)).